Consider the following 206-residue polypeptide: MAVVKVYDQNKQEAGEITLAPEVFEVEVRPEILHLVVRAQRAAFRAGTHATKTRAFVSGGGLKPWRQKGTGRARAGSIRSPLWRGGAIIFGPQPRDYEFKVNKKVRKLALRMALSSRLAGSNLLVVKGFELPEVKTKLFAKIADTLGLDKALIIAPEENTTLALSVRNIPGITIATPEQLSVYEILKHKQLVLVEGAVASVQDRLK.

This sequence belongs to the universal ribosomal protein uL4 family. As to quaternary structure, part of the 50S ribosomal subunit.

Its function is as follows. One of the primary rRNA binding proteins, this protein initially binds near the 5'-end of the 23S rRNA. It is important during the early stages of 50S assembly. It makes multiple contacts with different domains of the 23S rRNA in the assembled 50S subunit and ribosome. Forms part of the polypeptide exit tunnel. In Nitratidesulfovibrio vulgaris (strain ATCC 29579 / DSM 644 / CCUG 34227 / NCIMB 8303 / VKM B-1760 / Hildenborough) (Desulfovibrio vulgaris), this protein is Large ribosomal subunit protein uL4.